Consider the following 207-residue polypeptide: Large ribosomal subunit protein uL4 (207 aa).

Over residues 44 to 58 (RAPTRATRERSDVAR) the composition is skewed to basic and acidic residues. Positions 44 to 82 (RAPTRATRERSDVARSGKKFGRQKGGGTARHGDRRSPIF) are disordered.

This sequence belongs to the universal ribosomal protein uL4 family. In terms of assembly, part of the 50S ribosomal subunit.

In terms of biological role, one of the primary rRNA binding proteins, this protein initially binds near the 5'-end of the 23S rRNA. It is important during the early stages of 50S assembly. It makes multiple contacts with different domains of the 23S rRNA in the assembled 50S subunit and ribosome. Its function is as follows. Forms part of the polypeptide exit tunnel. The polypeptide is Large ribosomal subunit protein uL4 (Zymomonas mobilis subsp. mobilis (strain ATCC 31821 / ZM4 / CP4)).